The following is a 361-amino-acid chain: Aurora kinase B-A (361 aa).

The Protein kinase domain maps to 93–343 (FDIGRPLGKG…LKGVMEHPWV (251 aa)). ATP-binding positions include 99–107 (LGKGKFGNV) and Lys-122. Asp-216 serves as the catalytic Proton acceptor.

The protein belongs to the protein kinase superfamily. Ser/Thr protein kinase family. Aurora subfamily. As to quaternary structure, component of the CPC at least composed of survivin/birc5, incenp, cdca8/borealin and/or cdca9/dasra-A, and aurkb/aurora-B. Interacts directly (via N-terminus and kinase domain) with incenp (via C terminus), and may weakly interact (via N-terminus) with birc5.1 to stabilize the complex. Interacts with mtus1. Mg(2+) is required as a cofactor. Post-translationally, phosphorylated, stimulates kinase activity.

It localises to the nucleus. It is found in the chromosome. The enzyme catalyses L-seryl-[protein] + ATP = O-phospho-L-seryl-[protein] + ADP + H(+). The catalysed reaction is L-threonyl-[protein] + ATP = O-phospho-L-threonyl-[protein] + ADP + H(+). With respect to regulation, kinase activity is stimulated by both birc5/survivin-binding and cell-cycle specific phosphorylation. Functionally, serine/threonine-protein kinase component of the chromosomal passenger complex (CPC), a complex that acts as a key regulator of mitosis. The CPC complex has essential functions at the centromere in ensuring correct chromosome alignment and segregation and is required for chromatin-induced microtubule stabilization and spindle assembly. Involved in the bipolar attachment of spindle microtubules to kinetochores and is a key regulator for the onset of cytokinesis during mitosis. Required for central/midzone spindle assembly and cleavage furrow formation. Key component of the cytokinesis checkpoint, a process required to delay abscission to prevent both premature resolution of intercellular chromosome bridges and accumulation of DNA damage. Phosphorylates 'Ser-10' of histone H3 during mitosis. This is Aurora kinase B-A (aurkb-a) from Xenopus laevis (African clawed frog).